A 134-amino-acid chain; its full sequence is Large-conductance mechanosensitive channel (134 aa).

The next 2 membrane-spanning stretches (helical) occupy residues 16-36 (VVDMAVGIIIGVAFGKIVSSF) and 76-96 (GVFLQAIFDFIIIAFAIFIAV).

The protein belongs to the MscL family. As to quaternary structure, homopentamer.

It is found in the cell inner membrane. Channel that opens in response to stretch forces in the membrane lipid bilayer. May participate in the regulation of osmotic pressure changes within the cell. The protein is Large-conductance mechanosensitive channel of Thioalkalivibrio sulfidiphilus (strain HL-EbGR7).